The sequence spans 239 residues: MQKLELLYEGKAKRIYRTESADMVWVEYKDSATAFNGEKKETITGKGRLNNEITTLLFRKLQEVGIKTHFVEKLSETEQLVKKVSIIPLEVVTRNVIAGSLSKRLGMEEGTVLAEPIVEFYFKDDDLGDPLVTEDHIRVLNVASPEQVSVLRDMALQINQVLIDHFASCRVRLVDFKLEFGVTEEGEIILADEISPDTCRLWDETSNEKFDKDVFRRDLGNLTEAYEEILKRLGGISHV.

The protein belongs to the SAICAR synthetase family.

The catalysed reaction is 5-amino-1-(5-phospho-D-ribosyl)imidazole-4-carboxylate + L-aspartate + ATP = (2S)-2-[5-amino-1-(5-phospho-beta-D-ribosyl)imidazole-4-carboxamido]succinate + ADP + phosphate + 2 H(+). It functions in the pathway purine metabolism; IMP biosynthesis via de novo pathway; 5-amino-1-(5-phospho-D-ribosyl)imidazole-4-carboxamide from 5-amino-1-(5-phospho-D-ribosyl)imidazole-4-carboxylate: step 1/2. This Bacillus cereus (strain G9842) protein is Phosphoribosylaminoimidazole-succinocarboxamide synthase.